Here is a 428-residue protein sequence, read N- to C-terminus: Divalent metal cation transporter MntH (428 aa).

Helical transmembrane passes span 33–53, 60–80, 114–134, 136–156, 171–191, 210–230, 258–278, 299–319, 334–356, 365–385, and 406–426; these read WYLL…GNVA, AQFG…AALV, QAEI…AIAL, IMFN…SLLL, VITA…FVVT, SVLL…VYLH, VGLA…VAAL, TLGA…GLAS, LLHW…LAIL, TLVL…LPLV, and VGWV…YLTV.

It belongs to the NRAMP family.

The protein resides in the cell membrane. Functionally, h(+)-stimulated, divalent metal cation uptake system. Transports zinc and iron. Can also interact with manganese and copper. The protein is Divalent metal cation transporter MntH of Mycobacterium tuberculosis (strain CDC 1551 / Oshkosh).